A 30-amino-acid chain; its full sequence is M-poneritoxin-Nc3a (30 aa).

This sequence belongs to the ponericin-G family. Expressed by the venom gland.

It localises to the secreted. Its subcellular location is the target cell membrane. Membrane-perturbating peptide with multiple activities. It is insecticidal, since it induces contractile paralysis in insects (L.cuprina) during several hours and death after 24 hours. It shows a relatively strong and broad-spectrum antibacterial activity against both Gram-positive and Gram-negative bacteria (MIC&lt;20 uM). It is also antiparasitic, since it potently inhibits the larval development of the major pathogenic nematode of ruminants (H.contortus, IC(50)=5.6 uM) and reduces the motility of adult males of the other nematode B.malayi. It also shows cytotoxic activity against HEK293 cells (EC(50)=5-7 uM) but does not induce hemolysis in human erythrocytes. In addition, it causes a moderate increase in intracellular calcium concentration on neuronal and epithelial cell lines, which supports a non-specific membrane perturbation mechanism of action. In vivo, it induces pain by intraplantar injection into mice, suggesting a defensive function against vertebrate predators. This is M-poneritoxin-Nc3a from Neoponera commutata (Large hunting ant).